A 655-amino-acid polypeptide reads, in one-letter code: E3 ubiquitin-protein ligase TRIM32 (655 aa).

An RING-type zinc finger spans residues 21–66; that stretch reads CPICMESFTEEQLRPKLLHCGHTICRQCLEKLLASSINGVRCPFCS. S56 is modified (phosphoserine; by CHEK2). The B box-type; atypical zinc finger occupies 96–139; the sequence is VGLLMCRGCGRRLPRQFCRSCGVVLCEPCREADHQPPGHCTLPV. Zn(2+) is bound by residues C101, C104, C124, and H129. Positions 139–198 form a coiled coil; that stretch reads VKEAAEERRRDFGEKLTRLRELTGELQRRKAALEGVSRDLQARYKAVLQEYGHEERRIQE. Residues 327-347 are disordered; the sequence is MDMSPEEVAPSPRASPAKQRS. Residues S330, S337, and S341 each carry the phosphoserine modification. NHL repeat units lie at residues 360-403, 417-460, 461-501, 564-607, and 608-648; these read LKKM…FNRK, DSFV…YTMD, GHCV…FTVD, GRQI…FPKG, and GGYS…YSYH.

Belongs to the TRIM/RBCC family. As to quaternary structure, it self-associates. Interacts with DTNBP1. Interacts with PIAS4/PIASY upon treatment with UVB and TNF-alpha. Interacts with AMBRA1; promoting activation of ULK1 through unanchored 'Lys-63'-linked polyubiquitin chains. Interacts with TICAM1 and TAX1BP1; these interactions target TICAM1 to TAX1BP1-mediated selective autophagic degradation. In terms of processing, ubiquitinated. Post-translationally, phosphorylation at Ser-56 by CHEK2 under oxidative stress, activates the E3 ligase activity and promotes ATG7 ubiquitination leading to positive regulation of the autophagosme assembly. Ubiquitous. High expression in brain.

The protein resides in the cytoplasm. It catalyses the reaction S-ubiquitinyl-[E2 ubiquitin-conjugating enzyme]-L-cysteine + [acceptor protein]-L-lysine = [E2 ubiquitin-conjugating enzyme]-L-cysteine + N(6)-ubiquitinyl-[acceptor protein]-L-lysine.. It participates in protein modification; protein ubiquitination. E3 ubiquitin ligase that plays a role in various biological processes including neural stem cell differentiation, innate immunity, inflammatory resonse and autophagy. Plays a role in virus-triggered induction of IFN-beta and TNF-alpha by mediating the ubiquitination of STING1. Mechanistically, targets STING1 for 'Lys-63'-linked ubiquitination which promotes the interaction of STING1 with TBK1. Regulates bacterial clearance and promotes autophagy in Mycobacterium tuberculosis-infected macrophages. Negatively regulates TLR3/4-mediated innate immune and inflammatory response by triggering the autophagic degradation of TICAM1 in an E3 activity-independent manner. Plays an essential role in oxidative stress induced cell death by inducing loss of transmembrane potential and enhancing mitochondrial reactive oxygen species (ROS) production during oxidative stress conditions. Ubiquitinates XIAP and targets it for proteasomal degradation. Ubiquitinates DTNBP1 (dysbindin) and promotes its degradation. May ubiquitinate BBS2. Ubiquitinates PIAS4/PIASY and promotes its degradation in keratinocytes treated with UVB and TNF-alpha. Also acts as a regulator of autophagy by mediating formation of unanchored 'Lys-63'-linked polyubiquitin chains that activate ULK1: interaction with AMBRA1 is required for ULK1 activation. Positively regulates dendritic branching by promoting ubiquitination and subsequent degradation of the epigenetic factor CDYL. Under metabolic stress and phosphorylation by CHK2, mediates 'Lys-63'-linked ubiquitination of ATG7 at 'Lys-41' to initiate autophagy. This chain is E3 ubiquitin-protein ligase TRIM32, found in Mus musculus (Mouse).